Here is an 860-residue protein sequence, read N- to C-terminus: Leucine--tRNA ligase (860 aa).

A 'HIGH' region motif is present at residues 42 to 52; that stretch reads PYPSGRLHMGH. Positions 619–623 match the 'KMSKS' region motif; that stretch reads KMSKS. Lys622 contributes to the ATP binding site.

The protein belongs to the class-I aminoacyl-tRNA synthetase family.

It is found in the cytoplasm. The enzyme catalyses tRNA(Leu) + L-leucine + ATP = L-leucyl-tRNA(Leu) + AMP + diphosphate. In Histophilus somni (strain 2336) (Haemophilus somnus), this protein is Leucine--tRNA ligase.